The chain runs to 86 residues: DNA-directed RNA polymerase subunit Rpo11 (86 aa).

Belongs to the archaeal Rpo11/eukaryotic RPB11/RPC19 RNA polymerase subunit family. Part of the RNA polymerase complex.

The protein localises to the cytoplasm. The catalysed reaction is RNA(n) + a ribonucleoside 5'-triphosphate = RNA(n+1) + diphosphate. In terms of biological role, DNA-dependent RNA polymerase (RNAP) catalyzes the transcription of DNA into RNA using the four ribonucleoside triphosphates as substrates. The protein is DNA-directed RNA polymerase subunit Rpo11 of Archaeoglobus fulgidus (strain ATCC 49558 / DSM 4304 / JCM 9628 / NBRC 100126 / VC-16).